The following is a 308-amino-acid chain: 1D-myo-inositol 2-acetamido-2-deoxy-alpha-D-glucopyranoside deacetylase (308 aa).

3 residues coordinate Zn(2+): His37, Asp40, and His171.

It belongs to the MshB deacetylase family. Zn(2+) is required as a cofactor.

The enzyme catalyses 1D-myo-inositol 2-acetamido-2-deoxy-alpha-D-glucopyranoside + H2O = 1D-myo-inositol 2-amino-2-deoxy-alpha-D-glucopyranoside + acetate. Catalyzes the deacetylation of 1D-myo-inositol 2-acetamido-2-deoxy-alpha-D-glucopyranoside (GlcNAc-Ins) in the mycothiol biosynthesis pathway. The polypeptide is 1D-myo-inositol 2-acetamido-2-deoxy-alpha-D-glucopyranoside deacetylase (Mycobacterium sp. (strain KMS)).